The primary structure comprises 474 residues: uncharacterized protein (474 aa).

An N-terminal signal peptide occupies residues 1-23 (MLRRYLTLSFSSLLLLALLFLTG). The N-palmitoyl cysteine moiety is linked to residue Cys-24. A lipid anchor (S-diacylglycerol cysteine) is attached at Cys-24.

The protein belongs to the MG067/MG068/MG395 family.

It localises to the cell membrane. This is an uncharacterized protein from Mycoplasma genitalium (strain ATCC 33530 / DSM 19775 / NCTC 10195 / G37) (Mycoplasmoides genitalium).